A 520-amino-acid polypeptide reads, in one-letter code: 2-isopropylmalate synthase (520 aa).

Positions 5–267 constitute a Pyruvate carboxyltransferase domain; the sequence is VIIFDTTLRD…YTNINHQEIY (263 aa). Mn(2+) contacts are provided by Asp-14, His-202, His-204, and Asn-238. The tract at residues 392–520 is regulatory domain; that stretch reads HLDNFNIQSG…RIQQNTKEMV (129 aa).

It belongs to the alpha-IPM synthase/homocitrate synthase family. LeuA type 1 subfamily. Homodimer. Requires Mn(2+) as cofactor.

The protein localises to the cytoplasm. It catalyses the reaction 3-methyl-2-oxobutanoate + acetyl-CoA + H2O = (2S)-2-isopropylmalate + CoA + H(+). Its pathway is amino-acid biosynthesis; L-leucine biosynthesis; L-leucine from 3-methyl-2-oxobutanoate: step 1/4. Functionally, catalyzes the condensation of the acetyl group of acetyl-CoA with 3-methyl-2-oxobutanoate (2-ketoisovalerate) to form 3-carboxy-3-hydroxy-4-methylpentanoate (2-isopropylmalate). The protein is 2-isopropylmalate synthase of Photorhabdus laumondii subsp. laumondii (strain DSM 15139 / CIP 105565 / TT01) (Photorhabdus luminescens subsp. laumondii).